A 316-amino-acid polypeptide reads, in one-letter code: MENFPIINLEKLNGAERVATMEKINDACENWGFFELVNHGIPHEVMDTVEKLTKGHYKKCMEQRFKELVAKKGLEGVEVEVTDMDWESTFFLRHLPSSNISQLPDLDDVYREVMRDFRKRLEKLAEELLDLLCENLGLEKSYLKNTFYGSKGPNFGTKVSNYPPCPKPDLIKGLRAHTDAGGIILLFQDDKVSGLQLLKDGRWIDVPPMRHSIVVNLGDQLEVITNGKYKSVMHRVIAQKDGTRMSLASFYNPGNDALIYPAPALVDKEAEEHNKQVYPKFMFDDYMKLYANLKFQAKEPRFEAMKAMESDPIAIA.

The Fe2OG dioxygenase domain maps to 153–253; the sequence is PNFGTKVSNY…RMSLASFYNP (101 aa). Positions 177, 179, and 234 each coordinate Fe cation.

This sequence belongs to the iron/ascorbate-dependent oxidoreductase family. Requires Fe cation as cofactor. Leaves.

The catalysed reaction is 1-aminocyclopropane-1-carboxylate + L-ascorbate + O2 = ethene + L-dehydroascorbate + hydrogen cyanide + CO2 + 2 H2O. It functions in the pathway alkene biosynthesis; ethylene biosynthesis via S-adenosyl-L-methionine; ethylene from S-adenosyl-L-methionine: step 2/2. The chain is 1-aminocyclopropane-1-carboxylate oxidase 2 (ACO2) from Solanum lycopersicum (Tomato).